Reading from the N-terminus, the 453-residue chain is Oocyte zinc finger protein XlCOF6 (453 aa).

14 consecutive C2H2-type zinc fingers follow at residues 6 to 29 (FICS…CGKH), 67 to 89 (FTCT…HKTH), 95 to 117 (FTCM…YKAH), 123 to 145 (VRCT…KRLH), 151 to 173 (FTCT…HKTH), 179 to 201 (FACT…QRTH), 207 to 229 (FTCT…RRTH), 235 to 257 (FTCT…HKTH), 263 to 285 (FTCT…QITH), 291 to 313 (FTCT…HKTH), 319 to 341 (FACT…QRTH), 375 to 397 (FTCT…HKTH), 403 to 425 (FTCT…QRTH), and 431 to 453 (FTCT…RITH).

Belongs to the krueppel C2H2-type zinc-finger protein family.

It is found in the nucleus. May be involved in transcriptional regulation. The polypeptide is Oocyte zinc finger protein XlCOF6 (Xenopus laevis (African clawed frog)).